The following is a 130-amino-acid chain: Large ribosomal subunit protein bL20 (130 aa).

The protein belongs to the bacterial ribosomal protein bL20 family.

Binds directly to 23S ribosomal RNA and is necessary for the in vitro assembly process of the 50S ribosomal subunit. It is not involved in the protein synthesizing functions of that subunit. This chain is Large ribosomal subunit protein bL20, found in Leifsonia xyli subsp. xyli (strain CTCB07).